We begin with the raw amino-acid sequence, 611 residues long: Rho-related BTB domain-containing protein 3 (611 aa).

A rho-like region spans residues 1–175 (MSIHIVALGN…KELGATYLEL (175 aa)). BTB domains follow at residues 254-356 (VDVV…QWEE) and 420-487 (ADVV…CPAG). The interaction with Rab9 stretch occupies residues 420–611 (ADVVFEIQGT…HSRKCRCLVM (192 aa)).

In terms of assembly, interacts with RAB9A and RAB9B (at lower level compared to RAB9A-binding). Interacts with M6PRBP1/TIP47. As to expression, ubiquitous. Highly expressed in neural and cardiac tissues, pancreas, placenta and testis.

The protein localises to the golgi apparatus. Rab9-regulated ATPase required for endosome to Golgi transport. Involved in transport vesicle docking at the Golgi complex, possibly by participating in release M6PRBP1/TIP47 from vesicles to permit their efficient docking and fusion at the Golgi. Specifically binds Rab9, but not other Rab proteins. Has low intrinsic ATPase activity due to autoinhibition, which is relieved by Rab9. This chain is Rho-related BTB domain-containing protein 3 (RHOBTB3), found in Homo sapiens (Human).